A 326-amino-acid polypeptide reads, in one-letter code: tRNA-cytidine(32) 2-sulfurtransferase (326 aa).

The PP-loop motif signature appears at 63 to 68; it reads SGGKDS. Cys138, Cys141, and Cys229 together coordinate [4Fe-4S] cluster.

It belongs to the TtcA family. As to quaternary structure, homodimer. It depends on Mg(2+) as a cofactor. [4Fe-4S] cluster is required as a cofactor.

It localises to the cytoplasm. It carries out the reaction cytidine(32) in tRNA + S-sulfanyl-L-cysteinyl-[cysteine desulfurase] + AH2 + ATP = 2-thiocytidine(32) in tRNA + L-cysteinyl-[cysteine desulfurase] + A + AMP + diphosphate + H(+). The protein operates within tRNA modification. Functionally, catalyzes the ATP-dependent 2-thiolation of cytidine in position 32 of tRNA, to form 2-thiocytidine (s(2)C32). The sulfur atoms are provided by the cysteine/cysteine desulfurase (IscS) system. This chain is tRNA-cytidine(32) 2-sulfurtransferase, found in Leptothrix cholodnii (strain ATCC 51168 / LMG 8142 / SP-6) (Leptothrix discophora (strain SP-6)).